The following is a 179-amino-acid chain: Putative BPIFA4P protein (179 aa).

A signal peptide spans 1-20 (MLNVSGLFVLLCGLLVSSSA).

The protein belongs to the BPI/LBP/Plunc superfamily. Plunc family. Expressed in breast cancer and salivary gland.

It is found in the secreted. In terms of biological role, major protein in sweat, has surfactant properties. The chain is Putative BPIFA4P protein (BPIFA4P) from Homo sapiens (Human).